The primary structure comprises 195 residues: Pyruvoyl-dependent arginine decarboxylase AaxB (195 aa).

S53 is subject to Pyruvic acid (Ser).

Belongs to the pyruvoyl-dependent arginine decarboxylase family. In terms of assembly, trimer of an alpha-beta dimer. It depends on pyruvate as a cofactor.

Its subcellular location is the cytoplasm. The catalysed reaction is L-arginine + H(+) = agmatine + CO2. In terms of biological role, part of the AaxABC system, catalyzes the decarboxylation of L-arginine. The arginine uptake by the bacterium in the macrophage may be a virulence factor against the host innate immune response. This chain is Pyruvoyl-dependent arginine decarboxylase AaxB (aaxB), found in Chlamydia trachomatis serovar L2 (strain ATCC VR-902B / DSM 19102 / 434/Bu).